We begin with the raw amino-acid sequence, 307 residues long: Coproporphyrin III ferrochelatase (307 aa).

Fe-coproporphyrin III contacts are provided by residues Tyr12, Arg29, 45-46, Ser53, and Tyr124; that span reads RY. Fe(2+) is bound by residues His181 and Glu263.

This sequence belongs to the ferrochelatase family.

It is found in the cytoplasm. The enzyme catalyses Fe-coproporphyrin III + 2 H(+) = coproporphyrin III + Fe(2+). Its pathway is porphyrin-containing compound metabolism; protoheme biosynthesis. Involved in coproporphyrin-dependent heme b biosynthesis. Catalyzes the insertion of ferrous iron into coproporphyrin III to form Fe-coproporphyrin III. In Staphylococcus epidermidis (strain ATCC 35984 / DSM 28319 / BCRC 17069 / CCUG 31568 / BM 3577 / RP62A), this protein is Coproporphyrin III ferrochelatase.